The primary structure comprises 770 residues: Proton-coupled zinc antiporter SLC30A5 (770 aa).

The Cytoplasmic segment spans residues 1-29; that stretch reads MEEKYSSQALAGGGVLGPVDVPSARLTRY. Residues 30-50 form a helical membrane-spanning segment; that stretch reads IVLLCFAKFLKAVGLFESYDL. Residues 51-53 lie on the Lumenal side of the membrane; the sequence is LKA. The chain crosses the membrane as a helical span at residues 54 to 74; it reads VHLVQFIFIVKLGSAFFMVLF. At 75-95 the chain is on the cytoplasmic side; the sequence is QKPFSSGKVVTKHQWIKIFKH. A helical membrane pass occupies residues 96-116; it reads AVVGCIISLLWFFGLTLCGPL. Residue arginine 117 is a topological domain, lumenal. A helical transmembrane segment spans residues 118 to 138; it reads TLLLFEHSDVVVLSLLSVLFT. The Cytoplasmic segment spans residues 139–149; sequence SSGGGPAKTRG. The chain crosses the membrane as a helical span at residues 150-170; that stretch reads AAFFIIAVICLLLFDNDDLMA. Over 171 to 190 the chain is Lumenal; it reads KIAEHPEGHHDSALTHVLYT. A helical transmembrane segment spans residues 191 to 211; sequence VIAFLGVADHKGGVLLLVLAL. Residues 212–235 lie on the Cytoplasmic side of the membrane; it reads CCKVGFHMASRKLSVDVGGAKRLQ. A helical transmembrane segment spans residues 236-256; that stretch reads ALSHLVSVLLLCPWVIVLSLT. At 257–264 the chain is on the lumenal side; it reads TESKVESW. A helical membrane pass occupies residues 265-285; that stretch reads SSLIMPFITVIFFVVILDFYV. Over 286 to 300 the chain is Cytoplasmic; the sequence is ESICSVKMESSKCAR. A helical membrane pass occupies residues 301–321; that stretch reads YGSFLIFISALLFGNFWTHPI. Topologically, residues 322 to 339 are lumenal; sequence TDQLRAMNKPAHHESTEH. Residues 340–360 form a helical membrane-spanning segment; it reads VLSGGVVVSAVFFILSANILS. Over 361–415 the chain is Cytoplasmic; that stretch reads SPSRKGQKGTLIGYSPEGTPLYNFMGDAIQQSSQSLPRFIKESLKQILEEYDSRQ. A helical membrane pass occupies residues 416 to 436; sequence IFYFLCLNLAFTFVELFYGVW. The Lumenal portion of the chain corresponds to 437 to 445; the sequence is TNSLGLISD. A helical transmembrane segment spans residues 446-466; the sequence is GFHMLFDCSALVMGLFAALMT. Positions 448 and 452 each coordinate Zn(2+). Topologically, residues 467-480 are cytoplasmic; sequence RWKATRIFSYGYGR. The helical transmembrane segment at 481–501 threads the bilayer; the sequence is VEILSGFINGLFLMVIAFFVF. The Lumenal portion of the chain corresponds to 502–517; it reads MESVARLVDPPDIDTN. Residues 518–538 traverse the membrane as a helical segment; the sequence is MLTPVSVGGLIVNLVGICAFS. The his-rich loop; required for zinc transport stretch occupies residues 539–579; sequence HAHSHGASRGGCHSHEHSHSYHGHSHSHGHGHSHNDHGHSH. Residues 539 to 597 are Cytoplasmic-facing; it reads HAHSHGASRGGCHSHEHSHSYHGHSHSHGHGHSHNDHGHSHGHSHVSSGGGMNTNMRGV. Residues 548–586 form a disordered region; that stretch reads GGCHSHEHSHSYHGHSHSHGHGHSHNDHGHSHGHSHVSS. Residues 558-570 show a composition bias toward basic residues; sequence SYHGHSHSHGHGH. Residues 598–618 traverse the membrane as a helical segment; the sequence is FLHVLADTLGSVGVIVSTTFI. The Zn(2+) site is built by histidine 600 and aspartate 604. At 619 to 622 the chain is on the lumenal side; sequence QQFG. Residues 623 to 643 form a helical membrane-spanning segment; it reads WLIADPLCSLFIATLIFLSVI. The Cytoplasmic portion of the chain corresponds to 644–770; sequence PLLKDACQVL…KYYKDGTYIM (127 aa).

It belongs to the cation diffusion facilitator (CDF) transporter (TC 2.A.4) family. SLC30A subfamily. As to quaternary structure, heterodimer with SLC30A6/ZNT6; form a functional zinc ion transmembrane transporter.

The protein resides in the golgi apparatus. Its subcellular location is the golgi stack membrane. It is found in the cytoplasmic vesicle. The protein localises to the COPII-coated vesicle membrane. It localises to the secretory vesicle membrane. The protein resides in the trans-Golgi network membrane. The catalysed reaction is Zn(2+)(in) + 2 H(+)(out) = Zn(2+)(out) + 2 H(+)(in). Its function is as follows. Together with SLC30A6 forms a functional proton-coupled zinc ion antiporter mediating zinc entry into the lumen of organelles along the secretory pathway. By contributing to zinc ion homeostasis within the early secretory pathway, regulates the activation and folding of enzymes like alkaline phosphatases and enzymes involved in phosphatidylinositol glycan anchor biosynthesis. The chain is Proton-coupled zinc antiporter SLC30A5 from Gallus gallus (Chicken).